The sequence spans 51 residues: Large ribosomal subunit protein eL39 (51 aa).

Belongs to the eukaryotic ribosomal protein eL39 family.

Binds specifically to a region in 26S rRNA near the subunit interface. In Sulfolobus acidocaldarius (strain ATCC 33909 / DSM 639 / JCM 8929 / NBRC 15157 / NCIMB 11770), this protein is Large ribosomal subunit protein eL39 (rpl39e).